The primary structure comprises 957 residues: Glycine dehydrogenase (decarboxylating) (957 aa).

The residue at position 708 (Lys-708) is an N6-(pyridoxal phosphate)lysine.

It belongs to the GcvP family. The glycine cleavage system is composed of four proteins: P, T, L and H. It depends on pyridoxal 5'-phosphate as a cofactor.

It catalyses the reaction N(6)-[(R)-lipoyl]-L-lysyl-[glycine-cleavage complex H protein] + glycine + H(+) = N(6)-[(R)-S(8)-aminomethyldihydrolipoyl]-L-lysyl-[glycine-cleavage complex H protein] + CO2. In terms of biological role, the glycine cleavage system catalyzes the degradation of glycine. The P protein binds the alpha-amino group of glycine through its pyridoxal phosphate cofactor; CO(2) is released and the remaining methylamine moiety is then transferred to the lipoamide cofactor of the H protein. This chain is Glycine dehydrogenase (decarboxylating), found in Salmonella typhi.